Here is a 178-residue protein sequence, read N- to C-terminus: ADP-ribosylation factor-like protein 5 (178 aa).

Glycine 2 is lipidated: N-myristoyl glycine. Residues 24–31 (GLDNAGKT), 67–71 (DIGGQ), and 126–129 (NKQD) contribute to the GTP site.

This sequence belongs to the small GTPase superfamily. Arf family.

The protein localises to the golgi apparatus. Its function is as follows. GTP-binding protein that may be involved in protein trafficking; may modulate vesicle budding and uncoating within the Golgi apparatus. Plays a role in the shedding of pathogen spores from intestinal cells. In Caenorhabditis elegans, this protein is ADP-ribosylation factor-like protein 5 (arl-5).